A 416-amino-acid polypeptide reads, in one-letter code: Cysteate synthase (416 aa).

Lysine 104 is subject to N6-(pyridoxal phosphate)lysine. Asparagine 130 lines the pyridoxal 5'-phosphate pocket.

The protein belongs to the threonine synthase family. Cysteate synthase subfamily. As to quaternary structure, homotrimer. Requires pyridoxal 5'-phosphate as cofactor.

It carries out the reaction O-phospho-L-serine + sulfite + H(+) = L-cysteate + phosphate. It participates in cofactor biosynthesis; coenzyme M biosynthesis. In terms of biological role, specifically catalyzes the beta-elimination of phosphate from L-phosphoserine and the beta-addition of sulfite to the dehydroalanine intermediate to produce L-cysteate. The chain is Cysteate synthase from Methanosarcina barkeri (strain Fusaro / DSM 804).